Reading from the N-terminus, the 229-residue chain is Probable ribonuclease H (229 aa).

One can recognise an RNase H type-1 domain in the interval 42–164 (LQDISLEFDK…ADFLANSAAK (123 aa)). Residues E60, D87, and D156 each coordinate a divalent metal cation.

It belongs to the RNase H family. The cofactor is a divalent metal cation.

It carries out the reaction Endonucleolytic cleavage to 5'-phosphomonoester.. Its function is as follows. Endonuclease that specifically degrades the RNA of RNA-DNA hybrids. The sequence is that of Probable ribonuclease H (RNH1) from Acanthamoeba polyphaga mimivirus (APMV).